A 222-amino-acid chain; its full sequence is Cytidylate kinase (222 aa).

10–18 (GTSSSGKSV) contributes to the ATP binding site.

The protein belongs to the cytidylate kinase family. Type 1 subfamily.

The protein localises to the cytoplasm. It carries out the reaction CMP + ATP = CDP + ADP. The catalysed reaction is dCMP + ATP = dCDP + ADP. The sequence is that of Cytidylate kinase from Mycoplasma capricolum subsp. capricolum (strain California kid / ATCC 27343 / NCTC 10154).